Consider the following 259-residue polypeptide: ATP synthase subunit a (259 aa).

The propeptide at Met-1–Thr-10 is removed in mature form. Helical transmembrane passes span Leu-36–Leu-56, Trp-92–Ile-112, Leu-125–Tyr-145, Val-150–Ile-170, Ile-191–Ile-211, and Leu-216–Ile-236.

Belongs to the ATPase A chain family. F-type ATPases have 2 components, CF(1) - the catalytic core - and CF(0) - the membrane proton channel. In yeast, the dimeric form of ATP synthase consists of 17 polypeptides: alpha, beta, gamma, delta, epsilon, 4 (B), 5 (OSCP), 6 (A), 8, 9 (C), d, E (Tim11), f, g, h, i/j and k.

It is found in the mitochondrion inner membrane. Mitochondrial membrane ATP synthase (F(1)F(0) ATP synthase or Complex V) produces ATP from ADP in the presence of a proton gradient across the membrane which is generated by electron transport complexes of the respiratory chain. F-type ATPases consist of two structural domains, F(1) - containing the extramembraneous catalytic core and F(0) - containing the membrane proton channel, linked together by a central stalk and a peripheral stalk. During catalysis, ATP synthesis in the catalytic domain of F(1) is coupled via a rotary mechanism of the central stalk subunits to proton translocation. Key component of the proton channel; it may play a direct role in the translocation of protons across the membrane. The protein is ATP synthase subunit a (ATP6) of Saccharomyces cerevisiae (strain ATCC 204508 / S288c) (Baker's yeast).